Here is a 1192-residue protein sequence, read N- to C-terminus: DNA topoisomerase 2 (1192 aa).

Residues Asn-64, Asn-95, and 142–149 (GTNGVGLK) each bind ATP. Mg(2+) is bound by residues Glu-438, Asp-539, and Asp-541. One can recognise a Topo IIA-type catalytic domain in the interval 707–1174 (IPNFLDGMTR…PGASVWLEEI (468 aa)). The active-site O-(5'-phospho-DNA)-tyrosine intermediate is the Tyr-800.

This sequence belongs to the type II topoisomerase family. It depends on Mg(2+) as a cofactor. Requires Mn(2+) as cofactor. Ca(2+) serves as cofactor.

The protein localises to the host cytoplasm. The enzyme catalyses ATP-dependent breakage, passage and rejoining of double-stranded DNA.. In terms of biological role, type II topoisomerase. Processively relaxes supercoiled DNA. Displays DNA-supercoiling activity only when associated with the viral histone-like protein. The chain is DNA topoisomerase 2 from African swine fever virus (isolate Pig/Kenya/KEN-50/1950) (ASFV).